Reading from the N-terminus, the 495-residue chain is NAD(+)--protein-arginine ADP-ribosyltransferase Tre1 (495 aa).

Residues 278–309 (PDLQIKGPTPVKKPEPLQPARQPEKASAPKPV) are disordered. Residues 315–495 (MSLREAVGNQ…VTQFILKEIP (181 aa)) form the TR mART core domain. An ART domain region spans residues 344–495 (RSALLTDDQI…VTQFILKEIP (152 aa)). Residues arginine 406, serine 431, and glutamate 466 contribute to the active site.

The protein belongs to the Arg-specific ADP-ribosyltransferase family.

It localises to the secreted. Its subcellular location is the host cytoplasm. The catalysed reaction is L-arginyl-[protein] + NAD(+) = N(omega)-(ADP-D-ribosyl)-L-arginyl-[protein] + nicotinamide + H(+). Toxic component of a contact-dependent interbacterial competition system (also called effector-immunity systems). Acts by ADP-ribosylating a number of target proteins in target cells; E.coli target proteins include FtsZ, EFTu, RNase E, Fis, YegQ, GuaB and IF2. The chain is NAD(+)--protein-arginine ADP-ribosyltransferase Tre1 from Pseudomonas putida (strain GB-1).